A 176-amino-acid chain; its full sequence is Large ribosomal subunit protein uL10 (176 aa).

The protein belongs to the universal ribosomal protein uL10 family. Part of the ribosomal stalk of the 50S ribosomal subunit. The N-terminus interacts with L11 and the large rRNA to form the base of the stalk. The C-terminus forms an elongated spine to which L12 dimers bind in a sequential fashion forming a multimeric L10(L12)X complex.

Functionally, forms part of the ribosomal stalk, playing a central role in the interaction of the ribosome with GTP-bound translation factors. In Thioalkalivibrio sulfidiphilus (strain HL-EbGR7), this protein is Large ribosomal subunit protein uL10.